The sequence spans 680 residues: tRNA 5-methylaminomethyl-2-thiouridine biosynthesis bifunctional protein MnmC (680 aa).

The tract at residues 1-267 (MTAEPNKPCQ…MAAILSSDAP (267 aa)) is tRNA (mnm(5)s(2)U34)-methyltransferase. The FAD-dependent cmnm(5)s(2)U34 oxidoreductase stretch occupies residues 273–680 (IGGGLASAHL…LRKLLKGKAL (408 aa)).

In the N-terminal section; belongs to the methyltransferase superfamily. tRNA (mnm(5)s(2)U34)-methyltransferase family. The protein in the C-terminal section; belongs to the DAO family. FAD is required as a cofactor.

It localises to the cytoplasm. The enzyme catalyses 5-aminomethyl-2-thiouridine(34) in tRNA + S-adenosyl-L-methionine = 5-methylaminomethyl-2-thiouridine(34) in tRNA + S-adenosyl-L-homocysteine + H(+). Catalyzes the last two steps in the biosynthesis of 5-methylaminomethyl-2-thiouridine (mnm(5)s(2)U) at the wobble position (U34) in tRNA. Catalyzes the FAD-dependent demodification of cmnm(5)s(2)U34 to nm(5)s(2)U34, followed by the transfer of a methyl group from S-adenosyl-L-methionine to nm(5)s(2)U34, to form mnm(5)s(2)U34. The protein is tRNA 5-methylaminomethyl-2-thiouridine biosynthesis bifunctional protein MnmC of Shewanella putrefaciens (strain CN-32 / ATCC BAA-453).